We begin with the raw amino-acid sequence, 56 residues long: Alpha-conotoxin Pn1.2 (56 aa).

An N-terminal signal peptide occupies residues 1 to 16 (MFTVFLLVVLATTVVS). A propeptide spanning residues 17 to 39 (FTSDRASDGGNAAMSDLIALTIK) is cleaved from the precursor. Disulfide bonds link Cys41–Cys47 and Cys42–Cys55. The interval 43–45 (SHP) is ser-Xaa-Pro motif, crucial for potent interaction with nAChR. Cys55 is modified (cysteine amide).

It belongs to the conotoxin A superfamily. Post-translationally, non-native isomers 'ribbon' (with disulfide connectivity C1-C4; C2-C3) and 'beads' (with disulfide connectivity C1-C2; C3-C4) also inhibit high voltage-activated (HVA) calcium channel currents in rat DRG neurons (20-30% inhibition at 1 uM toxin). As to expression, expressed by the venom duct.

The protein resides in the secreted. Its function is as follows. Alpha-conotoxins act on postsynaptic membranes, they bind to the nicotinic acetylcholine receptors (nAChR) and thus inhibit them. This toxin inhibits human alpha-7/CHRNA7 and alpha-9-alpha-10/CHRNA9/CHRNA10 AChR (complete inhibition at 3 uM of toxin). In addition, this toxin inhibits high voltage-activated (HVA) calcium channel currents in rat DRG neurons (22% inhibition at 1 uM toxin) probably by activating GABA(B) receptors (GABBR1 and/or GABBR2). The protein is Alpha-conotoxin Pn1.2 of Conus pennaceus (Feathered cone).